A 712-amino-acid chain; its full sequence is Effector protein HopM1 (712 aa).

The disordered stretch occupies residues D22–G58. Positions P44 to A57 are enriched in polar residues.

As to quaternary structure, interacts with the chaperone ShcM. Interacts with host plant BIG5/ATMIN7.

The protein resides in the secreted. It localises to the host membrane. Its function is as follows. Involved in the suppression of basal resistance and promotion of disease symptoms in plants. Mediates the ubiquitination and degradation, via the host proteasome, of a low-abundance immunity-associated protein in Arabidopsis thaliana. May be involved in the inhibition of a host vesicle trafficking pathway. This Pseudomonas syringae pv. tomato (strain ATCC BAA-871 / DC3000) protein is Effector protein HopM1 (hopM1).